Consider the following 397-residue polypeptide: Lysophospholipid transporter LplT (397 aa).

Residues Met-1 to Lys-17 are Periplasmic-facing. The chain crosses the membrane as a helical span at residues Ala-18–Leu-38. At Ala-39 to Pro-52 the chain is on the cytoplasmic side. A helical membrane pass occupies residues Ile-53–Ala-73. Over Asp-74 to Leu-90 the chain is Periplasmic. Residues Leu-91 to Val-111 traverse the membrane as a helical segment. The Cytoplasmic portion of the chain corresponds to Gly-112–Thr-144. Residues Ile-145–Val-165 traverse the membrane as a helical segment. Ala-166 is a topological domain (periplasmic). The chain crosses the membrane as a helical span at residues Leu-167–Leu-187. At Ala-188–Ser-226 the chain is on the cytoplasmic side. Residues Leu-227–Leu-247 traverse the membrane as a helical segment. The Periplasmic portion of the chain corresponds to Gly-248–Thr-256. A helical transmembrane segment spans residues Tyr-257–Val-277. Over Thr-278–Glu-280 the chain is Cytoplasmic. The chain crosses the membrane as a helical span at residues Thr-281–Leu-301. The Periplasmic segment spans residues Gln-302–Glu-304. Residues Gln-305–Pro-325 traverse the membrane as a helical segment. Residues Leu-326–Ala-343 lie on the Cytoplasmic side of the membrane. Residues Ile-344–Leu-364 form a helical membrane-spanning segment. Residues Ala-365–Val-366 lie on the Periplasmic side of the membrane. Residues Met-367–Ile-387 traverse the membrane as a helical segment. Residues Thr-388–His-397 lie on the Cytoplasmic side of the membrane.

The protein belongs to the major facilitator superfamily. LplT (TC 2.A.1.42) family.

Its subcellular location is the cell inner membrane. Functionally, catalyzes the facilitated diffusion of 2-acyl-glycero-3-phosphoethanolamine (2-acyl-GPE) into the cell. In Escherichia coli O157:H7 (strain EC4115 / EHEC), this protein is Lysophospholipid transporter LplT.